A 356-amino-acid chain; its full sequence is Leucine carboxyl methyltransferase 1 (356 aa).

S-adenosyl-L-methionine is bound by residues R78, G101, D127, 183–184, and E218; that span reads DL.

It belongs to the methyltransferase superfamily. LCMT family.

It catalyses the reaction [phosphatase 2A protein]-C-terminal L-leucine + S-adenosyl-L-methionine = [phosphatase 2A protein]-C-terminal L-leucine methyl ester + S-adenosyl-L-homocysteine. Functionally, methylates the carboxyl group of the C-terminal leucine residue of protein phosphatase 2A catalytic subunits to form alpha-leucine ester residues. In Cryptococcus neoformans var. neoformans serotype D (strain JEC21 / ATCC MYA-565) (Filobasidiella neoformans), this protein is Leucine carboxyl methyltransferase 1 (PPM1).